We begin with the raw amino-acid sequence, 352 residues long: S-adenosylmethionine:tRNA ribosyltransferase-isomerase (352 aa).

The protein belongs to the QueA family. Monomer.

It localises to the cytoplasm. It carries out the reaction 7-aminomethyl-7-carbaguanosine(34) in tRNA + S-adenosyl-L-methionine = epoxyqueuosine(34) in tRNA + adenine + L-methionine + 2 H(+). Its pathway is tRNA modification; tRNA-queuosine biosynthesis. In terms of biological role, transfers and isomerizes the ribose moiety from AdoMet to the 7-aminomethyl group of 7-deazaguanine (preQ1-tRNA) to give epoxyqueuosine (oQ-tRNA). In Bacteroides fragilis (strain ATCC 25285 / DSM 2151 / CCUG 4856 / JCM 11019 / LMG 10263 / NCTC 9343 / Onslow / VPI 2553 / EN-2), this protein is S-adenosylmethionine:tRNA ribosyltransferase-isomerase.